Reading from the N-terminus, the 273-residue chain is Dermonecrotic toxin LhSicTox-alphaIA2biii (273 aa).

The active site involves His-5. Residues Glu-25 and Asp-27 each coordinate Mg(2+). Residue His-41 is the Nucleophile of the active site. Cystine bridges form between Cys-45-Cys-51 and Cys-47-Cys-190. Mg(2+) is bound at residue Asp-85.

This sequence belongs to the arthropod phospholipase D family. Class II subfamily. It depends on Mg(2+) as a cofactor. As to expression, expressed by the venom gland.

The protein resides in the secreted. It carries out the reaction an N-(acyl)-sphingosylphosphocholine = an N-(acyl)-sphingosyl-1,3-cyclic phosphate + choline. It catalyses the reaction an N-(acyl)-sphingosylphosphoethanolamine = an N-(acyl)-sphingosyl-1,3-cyclic phosphate + ethanolamine. The catalysed reaction is a 1-acyl-sn-glycero-3-phosphocholine = a 1-acyl-sn-glycero-2,3-cyclic phosphate + choline. The enzyme catalyses a 1-acyl-sn-glycero-3-phosphoethanolamine = a 1-acyl-sn-glycero-2,3-cyclic phosphate + ethanolamine. Dermonecrotic toxins cleave the phosphodiester linkage between the phosphate and headgroup of certain phospholipids (sphingolipid and lysolipid substrates), forming an alcohol (often choline) and a cyclic phosphate. This toxin acts on sphingomyelin (SM). It may also act on ceramide phosphoethanolamine (CPE), lysophosphatidylcholine (LPC) and lysophosphatidylethanolamine (LPE), but not on lysophosphatidylserine (LPS), and lysophosphatidylglycerol (LPG). It acts by transphosphatidylation, releasing exclusively cyclic phosphate products as second products. Induces dermonecrosis, hemolysis, increased vascular permeability, edema, inflammatory response, and platelet aggregation. The polypeptide is Dermonecrotic toxin LhSicTox-alphaIA2biii (Loxosceles hirsuta (Recluse spider)).